A 183-amino-acid chain; its full sequence is MKQRLLFIGPPGAGKGTQASRLCETHGLRHLSTGDLLRSEVSAGSALGQEAEAVMNRGELVSDDLVLAIVRSQLTALNGQGWLLDGFPRNVAQAEALEPLLGELQQSIETVVLLELDDEVLVERLLARGRADDNESVIRNRLEVYRQQTAPLIDYYQARGLLISVDAQGSVEAITTRLEASLA.

12–17 (GAGKGT) serves as a coordination point for ATP. Residues 32–61 (STGDLLRSEVSAGSALGQEAEAVMNRGELV) form an NMP region. Residues Thr-33, Arg-38, 59 to 61 (ELV), 86 to 89 (GFPR), and Gln-93 each bind AMP. The LID stretch occupies residues 127-133 (ARGRADD). ATP is bound at residue Arg-128. The AMP site is built by Arg-130 and Arg-141. ATP is bound at residue Gly-169.

This sequence belongs to the adenylate kinase family. In terms of assembly, monomer.

The protein localises to the cytoplasm. The enzyme catalyses AMP + ATP = 2 ADP. The protein operates within purine metabolism; AMP biosynthesis via salvage pathway; AMP from ADP: step 1/1. Functionally, catalyzes the reversible transfer of the terminal phosphate group between ATP and AMP. Plays an important role in cellular energy homeostasis and in adenine nucleotide metabolism. The protein is Adenylate kinase of Synechococcus sp. (strain WH7803).